The primary structure comprises 309 residues: tRNA dimethylallyltransferase (309 aa).

G10–T17 is an ATP binding site. T12–T17 lines the substrate pocket. Interaction with substrate tRNA stretches follow at residues D35 to L38 and R240 to R245.

The protein belongs to the IPP transferase family. In terms of assembly, monomer. Mg(2+) is required as a cofactor.

It catalyses the reaction adenosine(37) in tRNA + dimethylallyl diphosphate = N(6)-dimethylallyladenosine(37) in tRNA + diphosphate. Catalyzes the transfer of a dimethylallyl group onto the adenine at position 37 in tRNAs that read codons beginning with uridine, leading to the formation of N6-(dimethylallyl)adenosine (i(6)A). This is tRNA dimethylallyltransferase from Baumannia cicadellinicola subsp. Homalodisca coagulata.